A 1742-amino-acid chain; its full sequence is Unconventional myosin-Vc (1742 aa).

At alanine 2 the chain carries N-acetylalanine. A Myosin N-terminal SH3-like domain is found at 8-62 (TQYNRVWIPDPEEVWKSAEIAKDYRVGDKVLRLLLEDGTELDYSVNPESLPPLRN). Residues 67–753 (VGENDLTALS…QVAYLEKLRL (687 aa)) form the Myosin motor domain. 161-168 (GESGAGKT) contacts ATP. Positions 632–654 (LYLLMETLNATTPHYVRCIKPND) are actin-binding. 5 consecutive IQ domains span residues 756–779 (LRQS…FLRE), 780–806 (RRAA…VALK), 807–829 (EAWA…LYQL), 830–854 (IRMA…RKML), and 855–884 (EEHK…FVLN). The stretch at 884–1351 (NIQLTYRVQR…SKTIGKANDV (468 aa)) forms a coiled coil. Positions 1421 to 1697 (NSTINGIKQV…VRKVQALLNS (277 aa)) constitute a Dilute domain.

It belongs to the TRAFAC class myosin-kinesin ATPase superfamily. Myosin family. In terms of tissue distribution, expressed chiefly in non-neuronal tissues. Particularly abundant in epithelial and glandular tissues including pancreas, prostate, mammary, stomach, colon and lung.

Functionally, may be involved in transferrin trafficking. Likely to power actin-based membrane trafficking in many physiologically crucial tissues. This chain is Unconventional myosin-Vc (MYO5C), found in Homo sapiens (Human).